Here is a 757-residue protein sequence, read N- to C-terminus: uncharacterized protein (757 aa).

An S1 motif domain is found at 640 to 709 (GMILEGVVSN…ARKRIALTMR (70 aa)). Basic and acidic residues predominate over residues 711-741 (DDEPGGAKHKMPSENRSRERTAGRKPQRNDR). Residues 711–757 (DDEPGGAKHKMPSENRSRERTAGRKPQRNDRAPANSAMADAFAKLKR) form a disordered region.

This is an uncharacterized protein from Neisseria meningitidis serogroup B (strain ATCC BAA-335 / MC58).